A 51-amino-acid polypeptide reads, in one-letter code: Large ribosomal subunit protein bL33 (51 aa).

The protein belongs to the bacterial ribosomal protein bL33 family.

This chain is Large ribosomal subunit protein bL33, found in Ruthia magnifica subsp. Calyptogena magnifica.